Consider the following 272-residue polypeptide: Dermonecrotic toxin LvSicTox-alphaIC1biii (272 aa).

The active site involves His5. Positions 25 and 27 each coordinate Mg(2+). His41 serves as the catalytic Nucleophile. Disulfide bonds link Cys45–Cys51 and Cys47–Cys189. Asp84 is a binding site for Mg(2+).

The protein belongs to the arthropod phospholipase D family. Class II subfamily. The cofactor is Mg(2+). In terms of tissue distribution, expressed by the venom gland.

It is found in the secreted. The catalysed reaction is an N-(acyl)-sphingosylphosphocholine = an N-(acyl)-sphingosyl-1,3-cyclic phosphate + choline. It carries out the reaction an N-(acyl)-sphingosylphosphoethanolamine = an N-(acyl)-sphingosyl-1,3-cyclic phosphate + ethanolamine. The enzyme catalyses a 1-acyl-sn-glycero-3-phosphocholine = a 1-acyl-sn-glycero-2,3-cyclic phosphate + choline. It catalyses the reaction a 1-acyl-sn-glycero-3-phosphoethanolamine = a 1-acyl-sn-glycero-2,3-cyclic phosphate + ethanolamine. Dermonecrotic toxins cleave the phosphodiester linkage between the phosphate and headgroup of certain phospholipids (sphingolipid and lysolipid substrates), forming an alcohol (often choline) and a cyclic phosphate. This toxin acts on sphingomyelin (SM). It may also act on ceramide phosphoethanolamine (CPE), lysophosphatidylcholine (LPC) and lysophosphatidylethanolamine (LPE), but not on lysophosphatidylserine (LPS), and lysophosphatidylglycerol (LPG). It acts by transphosphatidylation, releasing exclusively cyclic phosphate products as second products. Induces dermonecrosis, hemolysis, increased vascular permeability, edema, inflammatory response, and platelet aggregation. The sequence is that of Dermonecrotic toxin LvSicTox-alphaIC1biii from Loxosceles variegata (Recluse spider).